A 249-amino-acid chain; its full sequence is MTHFDRSKVTREAVAAILDATLLKPEASRDDVAALVREATELGCGAVCVSPSMLPLGSVPPSGSLGTDATLRIATVAGFPSGKHASLVKATEARYAAQLGADEIDVVIDVAAALAKDQNALLAELITVREAVPHPLVLKVIVESALLDEEQLRTAVRACVQAGADYVKTSTGFHPAGGASVEAVSIMADELRKLGKLAPFGMGEEERVAAGLVGIKASGGIRDWDAALDMIEAGATRLGVSAAAKVLGA.

Asp105 functions as the Proton donor/acceptor in the catalytic mechanism. Catalysis depends on Lys168, which acts as the Schiff-base intermediate with acetaldehyde. The active-site Proton donor/acceptor is the Lys216.

The protein belongs to the DeoC/FbaB aldolase family. DeoC type 1 subfamily.

Its subcellular location is the cytoplasm. The enzyme catalyses 2-deoxy-D-ribose 5-phosphate = D-glyceraldehyde 3-phosphate + acetaldehyde. The protein operates within carbohydrate degradation; 2-deoxy-D-ribose 1-phosphate degradation; D-glyceraldehyde 3-phosphate and acetaldehyde from 2-deoxy-alpha-D-ribose 1-phosphate: step 2/2. Catalyzes a reversible aldol reaction between acetaldehyde and D-glyceraldehyde 3-phosphate to generate 2-deoxy-D-ribose 5-phosphate. This is Deoxyribose-phosphate aldolase from Corynebacterium jeikeium (strain K411).